Consider the following 266-residue polypeptide: Undecaprenyl-diphosphatase (266 aa).

8 consecutive transmembrane segments (helical) span residues 1–21 (MDTFQVIILALIQGLTEFLPI), 39–59 (QGLSFDVAVNTGSLFAVVIYF), 87–107 (WWIILATLPAVFFGFIAKDFI), 111–131 (LRSAGVIAVTTIVFGLLLWWA), 149–169 (ALLIGFAQALALIPGTSRSGA), 183–203 (AAARFSFLMSVPVSLGAAILV), 218–238 (ALTLGTVISFVAAYLCIHYFL), and 246–266 (MTPFVIYRLILGAVLCGFIFL).

It belongs to the UppP family.

The protein resides in the cell inner membrane. It carries out the reaction di-trans,octa-cis-undecaprenyl diphosphate + H2O = di-trans,octa-cis-undecaprenyl phosphate + phosphate + H(+). Catalyzes the dephosphorylation of undecaprenyl diphosphate (UPP). Confers resistance to bacitracin. This chain is Undecaprenyl-diphosphatase, found in Shewanella sp. (strain MR-4).